The sequence spans 507 residues: Myocyte-specific enhancer factor 2A (507 aa).

The region spanning 3–57 (RKKIQITRIMDERNRQVTFTKRKFGLMKKAYELSVLCDCEIALIIFNSSNKLFQY) is the MADS-box domain. Positions 58-86 (ASTDMDKVLLKYTEYNEPHESGTNSDIVE) form a DNA-binding region, mef2-type. At S59 the chain carries Phosphoserine; by CK2. Phosphoserine is present on residues S98 and S235. The disordered stretch occupies residues 175–269 (ADSSMLSPPQ…GGGNLGMNSR (95 aa)). Positions 209–245 (LSTSDLTVPNGAGSSPVGNGFVNSRASPNLVGTTGAN) are enriched in polar residues. K249 bears the N6-acetyllysine mark. S255 is subject to Phosphoserine. The required for interaction with MAPKs stretch occupies residues 266 to 283 (MNSRKPDLRVVIPPSSKG). The beta domain stretch occupies residues 289-296 (SEEEELEL). Residues T312 and T319 each carry the phosphothreonine; by MAPK7 and MAPK14 modification. The residue at position 355 (S355) is a Phosphoserine; by MAPK7. A compositionally biased stretch (polar residues) spans 390–402 (SNLSINTNQNINI). A disordered region spans residues 390–507 (SNLSINTNQN…KRMRMDAWVT (118 aa)). An N6-acetyllysine; alternate modification is found at K403. K403 is covalently cross-linked (Glycyl lysine isopeptide (Lys-Gly) (interchain with G-Cter in SUMO); alternate). Position 408 is a phosphoserine; by CDK5 (S408). Position 415 is a phosphothreonine (T415). The span at 423-443 (QPPPPSQAPQPQPPQPQPQPQ) shows a compositional bias: pro residues. S453 carries the phosphoserine modification. Low complexity predominate over residues 453–466 (SPVDSLSSSSSSYD). Basic and acidic residues-rich tracts occupy residues 467 to 477 (GSDREDPRGDF) and 488 to 507 (NTED…AWVT).

Belongs to the MEF2 family. As to quaternary structure, binds DNA as a homo- or heterodimer. Dimerizes with MEF2D. Interacts with HDAC7. Interacts with PIAS1; the interaction enhances sumoylation. Interacts with HDAC4, HDAC9 and SLC2A4RG. Interacts (via the N-terminal) with MAPK7; the interaction results in the phosphorylation and transcriptional activity of MEF2A. Constitutive phosphorylation on Ser-408 promotes Lys-403 sumoylation thus preventing acetylation at this site. Dephosphorylation on Ser-408 by PPP3CA upon neuron depolarization promotes a switch from sumoylation to acetylation on residue Lys-403 leading to inhibition of dendrite claw differentiation. Phosphorylation on Thr-312 and Thr-319 are the main sites involved in p38 MAPK signaling and activate transcription. Phosphorylated on these sites by MAPK14/p38alpha and MAPK11/p38beta, but not by MAPK13/p38delta nor by MAPK12/p38gamma. Phosphorylation on Ser-408 by CDK5 induced by neurotoxicity inhibits MEF2A transcriptional activation leading to apoptosis of cortical neurons. Phosphorylation on Thr-312, Thr-319 and Ser-355 can be induced by EGF. In terms of processing, sumoylation on Lys-403 is enhanced by PIAS1 and represses transcriptional activity. Phosphorylation on Ser-408 is required for sumoylation. Has no effect on nuclear location nor on DNA binding. Sumoylated with SUMO1 and, to a lesser extent with SUMO2 and SUMO3. PIASx facilitates sumoylation in postsynaptic dendrites in the cerebellar cortex and promotes their morphogenesis. Post-translationally, acetylation on Lys-403 activates transcriptional activity. Acetylated by p300 on several sites in diffentiating myocytes. Acetylation on Lys-4 increases DNA binding and transactivation. Hyperacetylation by p300 leads to enhanced cardiac myocyte growth and heart failure. Proteolytically cleaved on several sites by caspase 3 and caspase 7 following neurotoxicity. Preferentially cleaves the CDK5-mediated hyperphosphorylated form which leads to cortical neuron apoptosis and transcriptional inactivation.

The protein localises to the nucleus. Its function is as follows. Transcriptional activator which binds specifically to the MEF2 element, 5'-YTA[AT](4)TAR-3', found in numerous muscle-specific genes. Also involved in the activation of numerous growth factor- and stress-induced genes. Mediates cellular functions not only in skeletal and cardiac muscle development, but also in neuronal differentiation and survival. Plays diverse roles in the control of cell growth, survival and apoptosis via p38 MAPK signaling in muscle-specific and/or growth factor-related transcription. In cerebellar granule neurons, phosphorylated and sumoylated MEF2A represses transcription of NUR77 promoting synaptic differentiation. Associates with chromatin to the ZNF16 promoter. The protein is Myocyte-specific enhancer factor 2A (MEF2A) of Sus scrofa (Pig).